A 78-amino-acid polypeptide reads, in one-letter code: Cytochrome b-c1 complex subunit 10, mitochondrial (78 aa).

At 1–26 (MVSYVKGPAYKALSHFGKLNAPLVRS) the chain is on the mitochondrial matrix side. A helical transmembrane segment spans residues 27–46 (YIPNLVFWGAAAGGAVATFT). The Mitochondrial intermembrane segment spans residues 47–78 (EGVPLFQKTFYEKIPFFGQHWIYNPDPEDVPV).

Belongs to the UQCR11/QCR10 family. Component of the ubiquinol-cytochrome c oxidoreductase (cytochrome b-c1 complex, complex III, CIII), a multisubunit enzyme composed of 10 subunits. The complex is composed of 3 respiratory subunits cytochrome b (COB), cytochrome c1 (CYT1) and Rieske protein (RIP1), 2 core protein subunits COR1 and QCR2, and 5 low-molecular weight protein subunits QCR6, QCR7, QCR8, QCR9 and QCR10. The complex exists as an obligatory dimer and forms supercomplexes (SCs) in the inner mitochondrial membrane with a monomer or a dimer of cytochrome c oxidase (complex IV, CIV), resulting in 2 different assemblies (supercomplexes III(2)IV and III(2)IV(2)).

The protein resides in the mitochondrion inner membrane. Component of the ubiquinol-cytochrome c oxidoreductase, a multisubunit transmembrane complex that is part of the mitochondrial electron transport chain which drives oxidative phosphorylation. The complex plays an important role in the uptake of multiple carbon sources present in different host niches. The sequence is that of Cytochrome b-c1 complex subunit 10, mitochondrial from Candida albicans (strain SC5314 / ATCC MYA-2876) (Yeast).